We begin with the raw amino-acid sequence, 196 residues long: RNA polymerase II subunit B1 CTD phosphatase RTR2 (196 aa).

The segment at 52-123 (YLARLLSPMS…LSQTPLHERR (72 aa)) adopts an RTR1-type zinc-finger fold. The Zn(2+) site is built by Cys75, Cys80, Cys99, and His103.

Belongs to the RPAP2 family.

It is found in the cytoplasm. The protein localises to the nucleus. It carries out the reaction O-phospho-L-seryl-[protein] + H2O = L-seryl-[protein] + phosphate. The enzyme catalyses O-phospho-L-threonyl-[protein] + H2O = L-threonyl-[protein] + phosphate. Its function is as follows. Probable RNA polymerase II subunit B1 C-terminal domain (CTD) phosphatase that regulates RNA polymerase II transcription. May have functional redundancy with RTR1. The protein is RNA polymerase II subunit B1 CTD phosphatase RTR2 (RTR2) of Saccharomyces cerevisiae (strain ATCC 204508 / S288c) (Baker's yeast).